We begin with the raw amino-acid sequence, 196 residues long: Deoxyribose-phosphate aldolase (196 aa).

Residue Asp91 is the Proton donor/acceptor of the active site. Lys153 (schiff-base intermediate with acetaldehyde) is an active-site residue. Lys182 functions as the Proton donor/acceptor in the catalytic mechanism.

The protein belongs to the DeoC/FbaB aldolase family. DeoC type 1 subfamily.

The protein resides in the cytoplasm. It catalyses the reaction 2-deoxy-D-ribose 5-phosphate = D-glyceraldehyde 3-phosphate + acetaldehyde. It participates in carbohydrate degradation; 2-deoxy-D-ribose 1-phosphate degradation; D-glyceraldehyde 3-phosphate and acetaldehyde from 2-deoxy-alpha-D-ribose 1-phosphate: step 2/2. Functionally, catalyzes a reversible aldol reaction between acetaldehyde and D-glyceraldehyde 3-phosphate to generate 2-deoxy-D-ribose 5-phosphate. The sequence is that of Deoxyribose-phosphate aldolase from Mycoplasma mycoides subsp. mycoides SC (strain CCUG 32753 / NCTC 10114 / PG1).